A 257-amino-acid polypeptide reads, in one-letter code: Urease accessory protein UreD 3 (257 aa).

The disordered stretch occupies residues Met1–Pro22.

It belongs to the UreD family. In terms of assembly, ureD, UreF and UreG form a complex that acts as a GTP-hydrolysis-dependent molecular chaperone, activating the urease apoprotein by helping to assemble the nickel containing metallocenter of UreC. The UreE protein probably delivers the nickel.

It localises to the cytoplasm. Required for maturation of urease via the functional incorporation of the urease nickel metallocenter. The polypeptide is Urease accessory protein UreD 3 (Streptomyces griseus subsp. griseus (strain JCM 4626 / CBS 651.72 / NBRC 13350 / KCC S-0626 / ISP 5235)).